Reading from the N-terminus, the 206-residue chain is MSKKASMHKEEKHEKGQHKQPADEQPLGIDPEVSSGEASEGACQESDAKVQELEKALEEAQQQAEKYRGEMMRFAADFENFRKQKERELQAAGTRSIENTIRELLPLVDDMKRVMEHAPDDLEQSGEARPYLEGVELLWKNLLKWFERKGVKQIEACGQKLDVNFHEAITQVDHPDAEPDTVIEEYQTGYVMGDKVLRHAKVIVAR.

The interval 1 to 64 is disordered; the sequence is MSKKASMHKE…KALEEAQQQA (64 aa). The span at 46 to 58 shows a compositional bias: basic and acidic residues; sequence SDAKVQELEKALE.

The protein belongs to the GrpE family. Homodimer.

It localises to the cytoplasm. Functionally, participates actively in the response to hyperosmotic and heat shock by preventing the aggregation of stress-denatured proteins, in association with DnaK and GrpE. It is the nucleotide exchange factor for DnaK and may function as a thermosensor. Unfolded proteins bind initially to DnaJ; upon interaction with the DnaJ-bound protein, DnaK hydrolyzes its bound ATP, resulting in the formation of a stable complex. GrpE releases ADP from DnaK; ATP binding to DnaK triggers the release of the substrate protein, thus completing the reaction cycle. Several rounds of ATP-dependent interactions between DnaJ, DnaK and GrpE are required for fully efficient folding. In Prosthecochloris aestuarii (strain DSM 271 / SK 413), this protein is Protein GrpE.